The primary structure comprises 493 residues: 3-octaprenyl-4-hydroxybenzoate carboxy-lyase (493 aa).

Asparagine 177 serves as a coordination point for Mn(2+). Residues 180–182 (IYR), 194–196 (RWL), and 199–200 (RG) each bind prenylated FMN. Position 243 (glutamate 243) interacts with Mn(2+). Residue aspartate 292 is the Proton donor of the active site.

Belongs to the UbiD family. As to quaternary structure, homohexamer. The cofactor is prenylated FMN. Requires Mn(2+) as cofactor.

It is found in the cell membrane. The catalysed reaction is a 4-hydroxy-3-(all-trans-polyprenyl)benzoate + H(+) = a 2-(all-trans-polyprenyl)phenol + CO2. Its pathway is cofactor biosynthesis; ubiquinone biosynthesis. In terms of biological role, catalyzes the decarboxylation of 3-octaprenyl-4-hydroxy benzoate to 2-octaprenylphenol, an intermediate step in ubiquinone biosynthesis. This Colwellia psychrerythraea (strain 34H / ATCC BAA-681) (Vibrio psychroerythus) protein is 3-octaprenyl-4-hydroxybenzoate carboxy-lyase.